A 339-amino-acid polypeptide reads, in one-letter code: Lymphocyte-specific protein 1 (339 aa).

Positions 1–198 (MAEASSDPGA…SPPLSPTTKL (198 aa)) are disordered. Position 24 is a phosphoserine (Ser-24). Composition is skewed to basic and acidic residues over residues 32–43 (VHEQCQHERDRQ) and 51–61 (GGGHVPERPKQ). Ser-111 is modified (phosphoserine). Residues 117 to 140 (EDRPGLHAYEKEDSDEVHLEELSL) are compositionally biased toward basic and acidic residues. Thr-175 carries the phosphothreonine modification. A phosphoserine mark is found at Ser-177, Ser-188, Ser-189, and Ser-193. Over residues 185–196 (IEQSSPPLSPTT) the composition is skewed to polar residues. Ser-252 carries the post-translational modification Phosphoserine; by MAPKAPK2. The interval 294–315 (KSLWEQKGGSKTSSTIKSTPSG) is disordered. Residues 300 to 315 (KGGSKTSSTIKSTPSG) show a composition bias toward low complexity. Position 327 is an N6-acetyllysine (Lys-327).

In terms of assembly, binds actin. Phosphorylated by casein kinase II, protein kinase C and MAPKAPK2. Phosphorylation by PKC induces translocation from membrane to cytoplasm. Phosphorylation by MAPKAPK2 may regulate neutrophil chemotaxis. In terms of tissue distribution, activated T-lymphocytes.

It is found in the cell membrane. In terms of biological role, may play a role in mediating neutrophil activation and chemotaxis. The chain is Lymphocyte-specific protein 1 (LSP1) from Homo sapiens (Human).